Reading from the N-terminus, the 141-residue chain is Large ribosomal subunit protein uL11 (141 aa).

It belongs to the universal ribosomal protein uL11 family. In terms of assembly, part of the ribosomal stalk of the 50S ribosomal subunit. Interacts with L10 and the large rRNA to form the base of the stalk. L10 forms an elongated spine to which L12 dimers bind in a sequential fashion forming a multimeric L10(L12)X complex. One or more lysine residues are methylated.

Its function is as follows. Forms part of the ribosomal stalk which helps the ribosome interact with GTP-bound translation factors. The chain is Large ribosomal subunit protein uL11 from Chlorobaculum parvum (strain DSM 263 / NCIMB 8327) (Chlorobium vibrioforme subsp. thiosulfatophilum).